The sequence spans 89 residues: Small ribosomal subunit protein uS15 (89 aa).

Positions 1–10 (MAVTTDQKSQ) are enriched in polar residues. Residues 1-22 (MAVTTDQKSQVMRDYQRAAGDT) form a disordered region.

The protein belongs to the universal ribosomal protein uS15 family. Part of the 30S ribosomal subunit. Forms a bridge to the 50S subunit in the 70S ribosome, contacting the 23S rRNA.

Its function is as follows. One of the primary rRNA binding proteins, it binds directly to 16S rRNA where it helps nucleate assembly of the platform of the 30S subunit by binding and bridging several RNA helices of the 16S rRNA. In terms of biological role, forms an intersubunit bridge (bridge B4) with the 23S rRNA of the 50S subunit in the ribosome. This is Small ribosomal subunit protein uS15 from Nitrosomonas europaea (strain ATCC 19718 / CIP 103999 / KCTC 2705 / NBRC 14298).